A 542-amino-acid polypeptide reads, in one-letter code: Formate--tetrahydrofolate ligase (542 aa).

Position 53 to 60 (53 to 60) interacts with ATP; sequence TPAGEGKT.

It belongs to the formate--tetrahydrofolate ligase family.

The enzyme catalyses (6S)-5,6,7,8-tetrahydrofolate + formate + ATP = (6R)-10-formyltetrahydrofolate + ADP + phosphate. The protein operates within one-carbon metabolism; tetrahydrofolate interconversion. This Thermotoga petrophila (strain ATCC BAA-488 / DSM 13995 / JCM 10881 / RKU-1) protein is Formate--tetrahydrofolate ligase.